We begin with the raw amino-acid sequence, 333 residues long: DNA-directed RNA polymerase subunit alpha (333 aa).

The segment at 1–233 (MVREKIRVST…DLFIPFLHAE (233 aa)) is alpha N-terminal domain (alpha-NTD). An alpha C-terminal domain (alpha-CTD) region spans residues 269-333 (IALKYIFIDQ…DILEMEKNFA (65 aa)).

Belongs to the RNA polymerase alpha chain family. As to quaternary structure, in plastids the minimal PEP RNA polymerase catalytic core is composed of four subunits: alpha, beta, beta', and beta''. When a (nuclear-encoded) sigma factor is associated with the core the holoenzyme is formed, which can initiate transcription.

The protein localises to the plastid. The protein resides in the chloroplast. It catalyses the reaction RNA(n) + a ribonucleoside 5'-triphosphate = RNA(n+1) + diphosphate. DNA-dependent RNA polymerase catalyzes the transcription of DNA into RNA using the four ribonucleoside triphosphates as substrates. This is DNA-directed RNA polymerase subunit alpha from Cucumis sativus (Cucumber).